We begin with the raw amino-acid sequence, 529 residues long: Peptide chain release factor 3 (529 aa).

The 270-residue stretch at 11–280 (NKRRTFAIIS…GLTEWAPKPQ (270 aa)) folds into the tr-type G domain. GTP contacts are provided by residues 20–27 (SHPDAGKT), 88–92 (DTPGH), and 142–145 (NKLD).

This sequence belongs to the TRAFAC class translation factor GTPase superfamily. Classic translation factor GTPase family. PrfC subfamily.

It is found in the cytoplasm. Increases the formation of ribosomal termination complexes and stimulates activities of RF-1 and RF-2. It binds guanine nucleotides and has strong preference for UGA stop codons. It may interact directly with the ribosome. The stimulation of RF-1 and RF-2 is significantly reduced by GTP and GDP, but not by GMP. The sequence is that of Peptide chain release factor 3 from Mannheimia succiniciproducens (strain KCTC 0769BP / MBEL55E).